Consider the following 444-residue polypeptide: Glutamyl-tRNA reductase (444 aa).

Residues T41 to R44, S102, E107 to E109, and Q113 each bind substrate. Catalysis depends on C42, which acts as the Nucleophile. Residue G181 to A186 coordinates NADP(+).

Belongs to the glutamyl-tRNA reductase family. As to quaternary structure, homodimer.

The enzyme catalyses (S)-4-amino-5-oxopentanoate + tRNA(Glu) + NADP(+) = L-glutamyl-tRNA(Glu) + NADPH + H(+). Its pathway is porphyrin-containing compound metabolism; protoporphyrin-IX biosynthesis; 5-aminolevulinate from L-glutamyl-tRNA(Glu): step 1/2. In terms of biological role, catalyzes the NADPH-dependent reduction of glutamyl-tRNA(Glu) to glutamate 1-semialdehyde (GSA). The sequence is that of Glutamyl-tRNA reductase from Cutibacterium acnes (strain DSM 16379 / KPA171202) (Propionibacterium acnes).